Consider the following 2410-residue polypeptide: MHGLQGLCFRRAVIALALLLFHSVFAAPYSEDEEPWNLNQNKNASSVLEYSGEWADHDFFPSPDNWRMSFITVILDRWYDGDPSNNDIEKTPFEYDISEVSFRNGGDIVGLELSLDYLEGLGTQGIYIAGTPFVNMPWGADQYSPLDYTILDHHLGTIDQWRSTITAMHERGMYLVVDLTVATLGDLIGMVGHLNDTSGVDFNLNEYNAMWKTSEYRYVDFNFTNVYNTSCEYPRFWGEDGGPVSIQFKGCYVSDYDHYGDTEAFGSHPDWQRQLSKFASVQDRLRDWKPDVAEKLMHLSCLVISMLDVDGFRIDKATQMTADFIVDWSMYVRECAAKYNKKNFLIVGEVTGSSSYGSIYYNRGRQPDQRPPNVTAAFNYTSDESQYSLRDSDHYGFDGSAFHYSIYRALLRFLGMDSKMEIDFDVSSVLTTAWNGIQINEDAVNINTGTVEPLHMYGVANHDVFRWGAIENGTARLILGTMITSLLFPGIPLLYYGDEQGMYVLDNSANNYLYGRQAMNSARAWYIHGCYNGSATSYPTVDLSPAQRGCQDSWNYLDHFDIASAHRNVYRNIHSIRRHYLSLSEGWRFDHIANWTDDVYFPDSQPYASPMGLYSVLRGPMKEIQDFDSITNASNVSKSEVWVLYANRNDTHLWSYDCTDEDSAIIGPWKSGTTLRNLIYPYDTIELEDSWNSSWGCIPNIELDPYAFKLYVPEEDFIENDPIITSLTPEHDARVVASGNEIDLTIEFSRSMDCDSIKNALSVVSSTRPKNTTAVIDVDSSFCRNYSEDASTSLHGQTAGRFAWYGTLTNIDPGIHRISLKSVPTSDFSSRTLSTDNFLIRVGSTNNPIVHYSANYSDTLLIMQDGDLYINHSAPGAVLFRYSTDFQSHWSDWEEYNGGLTKVQASNWTGTRRQGWEGHHIHVQYWSDLGGSANHMQQSDYGFKYRRFLPHMFLEGDFNEYGYDSGVENRFLQKSDFYWEAGFISETYPAAIQLNVWGMNPDGIPDKTRVYGSQGNSTVLSRSDPASLVGNNITIYHPPPHGYLSYKILLRDDDMIYRLAPSGEWGVSIAIYVLCIVIPPLSAIVVSWAFKNSFYTVKFNKHGNNDLGKFYPLKSLVPFRKKNDLDSPAKVTPVVSGVSARKKKCVLIATLEYDITDWKIRIKIGGLGVMAQLMAQHLKHEDLVWVVPCVGDVVYPEAEEASPIEVKIIDQTYTINVYHHYLDNIKYVLLDAPVFRRQTSKEPYPARMDDLGSAIFYSAWNQCIAEVIRRNPIDIYHINDYHGALAPCYLLPDIIPCALSLHNAEFQGLWPLRTPEEKEEVCAVYNISQRVCTKYVQFGNVFNLLHAAVSYIRIHQKGFGAVGVSNKYGKRSWARYPIFWGLKKIGKLPNPDPTDTDEIVDDKAVAITDIDPDMEKSKVEHKRLAQEWAGLEVNEKYDLLVFVGRWSSQKGIDLIADIAPSLLESYKVQLICVGPIIDLYGKFAAEKLDVLQKKYPTRVFSQPKFTQLPPYIFSGADFALIPSRDEPFGLVAVEFGRKGALGIGARVGGLGQMPGWWYSVESSATPHLLKQFEQACQQALSSSQRTRARLRARSAKQRFPVSQWKAKLEALTDGCIKCSQKYGRNSRSRSSFYSLIHESFSRSSEVLPTSSDTNLDAKRAEEAEMIMIETPPTAEANTGAKLDRSLSLGSRRGPGHTTEDDASDGLDTIQEESMTAGDSTSGGSDISRYRAERLNPDSHSPSEYSFDSGDYEFDPQRSYYYDDLFDDDTTIRNAPSFRPQMGSFDAEHAVGATFSQDDLSDPARSVDSDSVSPPLPPFVAGSNPNARNNNNPYFYGNLHTESSLSLASVMSGKEKRDFSLTRVEETFTDEDGQALRSFSEKLQKLNAKNSKDDLCIEQYLMKSERSFFHERRAIKLGLQKPNKLHVNELSSHSGTEESESLSNGQTSYDDIIAMTDESNYTQLGDDDFKTIHGLKKFMLFKIYDWPIYSIFLALGQILAATAYQLTLFTGTSNIQTYEIYSVCAFFIGASFVWWFMFARLPSYYVLSIPWLFYAVALFLVGLPAFDTVAPGRVWITNVAAWIYAIASASGSIFFSLNFGEEGAVQTRIWVFRACLVQGVQQVWSAALWYWGAHLNKRLTAGEANTFKMSPAIPSITWPLSAVSILIFALLFKGLPEYYRQLSGSIPAFYKSLLRRKLVVWFCISVFLQNFWLSSLNGRSWSYLWDIGNIHQWQIFLLIVAFYIVLWALLLGVLAWISRTHSWIICVFGVGLGAPRWLQQFWATSNIGLYLPWAGYSGPYLGRTLWLWLGVLDAIQSVGIGMILLQTLTRRHVASTLMTGQIVGAVATMIGRGASPNREGPANVFIDFTKWNHGDGSSILASAPFWINIICQLAICVGYLAFFRRENLSRP.

Phosphoserine occurs at positions 1643, 1644, and 1651. T1653 is modified (phosphothreonine). Residues 1685 to 1706 (SLSLGSRRGPGHTTEDDASDGL) are disordered. Phosphoserine is present on residues S1738 and S1812. The tract at residues 1796-1827 (QDDLSDPARSVDSDSVSPPLPPFVAGSNPNAR) is disordered. The segment covering 1802 to 1827 (PARSVDSDSVSPPLPPFVAGSNPNAR) has biased composition (low complexity).

It belongs to the glycosyltransferase group 1 family. Interacts with sad1.

It carries out the reaction [(1-&gt;3)-alpha-D-glucosyl](n) + UDP-alpha-D-glucose = [(1-&gt;3)-alpha-D-glucosyl](n+1) + UDP + H(+). In terms of biological role, required for alpha-1,3-glucan and alpha-1,4-glucan production which are required for cell wall synthesis. The protein is Cell wall alpha-1,3-glucan synthase ags1 (ags1) of Schizosaccharomyces pombe (strain 972 / ATCC 24843) (Fission yeast).